The following is a 392-amino-acid chain: Cytochrome b (392 aa).

Helical transmembrane passes span 38-58, 82-104, 119-139, and 185-205; these read FGSL…FLAM, WLLR…LHIF, VRCL…TGYV, and FFSL…LHLA. His88 and His102 together coordinate heme b. Positions 189 and 203 each coordinate heme b. Residue His208 coordinates a ubiquinone. Helical transmembrane passes span 231 to 251, 295 to 315, 327 to 347, and 354 to 373; these read FYVK…IWIF, SGGV…PFFK, IHQG…WIGC, and FVTI…AITP.

The protein belongs to the cytochrome b family. The main subunits of complex b-c1 are: cytochrome b, cytochrome c1 and the Rieske protein. Heme b is required as a cofactor.

It localises to the mitochondrion inner membrane. Its function is as follows. Component of the ubiquinol-cytochrome c reductase complex (complex III or cytochrome b-c1 complex) that is part of the mitochondrial respiratory chain. The b-c1 complex mediates electron transfer from ubiquinol to cytochrome c. Contributes to the generation of a proton gradient across the mitochondrial membrane that is then used for ATP synthesis. This is Cytochrome b (MT-CYB) from Pisum sativum (Garden pea).